Consider the following 913-residue polypeptide: Striatin-interacting protein homolog (913 aa).

3 stretches are compositionally biased toward low complexity: residues 177 to 188, 195 to 204, and 791 to 811; these read QQQQQQQQNENE, TNFTTTTTTT, and NNNNSNNNNNNNNNNSTNNDN. Disordered regions lie at residues 177-204 and 791-814; these read QQQQQQQQNENEGSGEGGTNFTTTTTTT and NNNNSNNNNNNNNNNSTNNDNGLT.

The protein belongs to the STRIP family.

The chain is Striatin-interacting protein homolog (fam40) from Dictyostelium discoideum (Social amoeba).